The following is a 438-amino-acid chain: Flotillin-2 (438 aa).

Belongs to the band 7/mec-2 family. Flotillin subfamily. As to quaternary structure, heterooligomeric complex of flotillins 1 and 2.

The protein localises to the membrane. Its function is as follows. May play a role in axon growth and regeneration. May be involved in epidermal cell adhesion and epidermal structure and function. In Drosophila melanogaster (Fruit fly), this protein is Flotillin-2.